Reading from the N-terminus, the 657-residue chain is N-acetylgalactosaminyltransferase 7 (657 aa).

The Cytoplasmic portion of the chain corresponds to 1–6 (MRLKIG). The helical; Signal-anchor for type II membrane protein transmembrane segment at 7 to 29 (FILRSLLVVGSFLGLVVLWSSLS) threads the bilayer. Disordered stretches follow at residues 30 to 66 (SRPD…DDRF) and 83 to 105 (ESIR…DSQR). Residues 30 to 657 (SRPDDQSPLS…KWEMNNIHSV (628 aa)) are Lumenal-facing. 5 cysteine pairs are disulfide-bonded: C197-C435, C426-C507, C545-C562, C585-C600, and C625-C640. The catalytic subdomain A stretch occupies residues 206-317 (LLTSSVVIVF…VNWYAPLVAP (112 aa)). D247 and R277 together coordinate substrate. Mn(2+) contacts are provided by D301 and H303. The interval 381–443 (PYRSPAMAGG…PCSRVGHIYR (63 aa)) is catalytic subdomain B. W412 contributes to the substrate binding site. H440 is a Mn(2+) binding site. R443 provides a ligand contact to substrate. A Ricin B-type lectin domain is found at 532 to 652 (VEWGEIRGLE…SKMTQKWEMN (121 aa)).

Belongs to the glycosyltransferase 2 family. GalNAc-T subfamily. It depends on Mn(2+) as a cofactor. Highly expressed in sublingual gland. Expressed at lower level in stomach, small intestiine and colon.

It localises to the golgi apparatus membrane. The enzyme catalyses L-seryl-[protein] + UDP-N-acetyl-alpha-D-galactosamine = a 3-O-[N-acetyl-alpha-D-galactosaminyl]-L-seryl-[protein] + UDP + H(+). It carries out the reaction L-threonyl-[protein] + UDP-N-acetyl-alpha-D-galactosamine = a 3-O-[N-acetyl-alpha-D-galactosaminyl]-L-threonyl-[protein] + UDP + H(+). The protein operates within protein modification; protein glycosylation. In terms of biological role, glycopeptide transferase involved in O-linked oligosaccharide biosynthesis, which catalyzes the transfer of an N-acetyl-D-galactosamine residue to an already glycosylated peptide. In contrast to other proteins of the family, it does not act as a peptide transferase that transfers GalNAc onto serine or threonine residue on the protein receptor, but instead requires the prior addition of a GalNAc on a peptide before adding additional GalNAc moieties. Some peptide transferase activity is however not excluded, considering that its appropriate peptide substrate may remain unidentified. The polypeptide is N-acetylgalactosaminyltransferase 7 (Galnt7) (Mus musculus (Mouse)).